Consider the following 123-residue polypeptide: Small ribosomal subunit protein uS13 (123 aa).

The tract at residues G94–K123 is disordered. Positions A106–K123 are enriched in basic residues.

Belongs to the universal ribosomal protein uS13 family. In terms of assembly, part of the 30S ribosomal subunit. Forms a loose heterodimer with protein S19. Forms two bridges to the 50S subunit in the 70S ribosome.

Its function is as follows. Located at the top of the head of the 30S subunit, it contacts several helices of the 16S rRNA. In the 70S ribosome it contacts the 23S rRNA (bridge B1a) and protein L5 of the 50S subunit (bridge B1b), connecting the 2 subunits; these bridges are implicated in subunit movement. Contacts the tRNAs in the A and P-sites. This chain is Small ribosomal subunit protein uS13, found in Mycoplasmopsis agalactiae (strain NCTC 10123 / CIP 59.7 / PG2) (Mycoplasma agalactiae).